We begin with the raw amino-acid sequence, 114 residues long: T cell receptor beta variable 9 (114 aa).

An N-terminal signal peptide occupies residues 1-21 (MGFRLLCCVAFCLLGAGPVDS). Residues 22-114 (GVTQTPKHLI…SALYFCASSV (93 aa)) enclose the Ig-like domain. C42 and C110 are oxidised to a cystine. A glycan (N-linked (GlcNAc...) asparagine) is linked at N96.

Alpha-beta TR is a heterodimer composed of an alpha and beta chain; disulfide-linked. The alpha-beta TR is associated with the transmembrane signaling CD3 coreceptor proteins to form the TR-CD3 (TcR or TCR). The assembly of alpha-beta TR heterodimers with CD3 occurs in the endoplasmic reticulum where a single alpha-beta TR heterodimer associates with one CD3D-CD3E heterodimer, one CD3G-CD3E heterodimer and one CD247 homodimer forming a stable octameric structure. CD3D-CD3E and CD3G-CD3E heterodimers preferentially associate with TR alpha and TR beta chains, respectively. The association of the CD247 homodimer is the last step of TcR assembly in the endoplasmic reticulum and is required for transport to the cell surface.

Its subcellular location is the cell membrane. Its function is as follows. V region of the variable domain of T cell receptor (TR) beta chain that participates in the antigen recognition. Alpha-beta T cell receptors are antigen specific receptors which are essential to the immune response and are present on the cell surface of T lymphocytes. Recognize peptide-major histocompatibility (MH) (pMH) complexes that are displayed by antigen presenting cells (APC), a prerequisite for efficient T cell adaptive immunity against pathogens. Binding of alpha-beta TR to pMH complex initiates TR-CD3 clustering on the cell surface and intracellular activation of LCK that phosphorylates the ITAM motifs of CD3G, CD3D, CD3E and CD247 enabling the recruitment of ZAP70. In turn ZAP70 phosphorylates LAT, which recruits numerous signaling molecules to form the LAT signalosome. The LAT signalosome propagates signal branching to three major signaling pathways, the calcium, the mitogen-activated protein kinase (MAPK) kinase and the nuclear factor NF-kappa-B (NF-kB) pathways, leading to the mobilization of transcription factors that are critical for gene expression and essential for T cell growth and differentiation. The T cell repertoire is generated in the thymus, by V-(D)-J rearrangement. This repertoire is then shaped by intrathymic selection events to generate a peripheral T cell pool of self-MH restricted, non-autoaggressive T cells. Post-thymic interaction of alpha-beta TR with the pMH complexes shapes TR structural and functional avidity. The chain is T cell receptor beta variable 9 from Homo sapiens (Human).